The primary structure comprises 376 residues: Glucose-1-phosphate adenylyltransferase (376 aa).

Residues tyrosine 101, glycine 166, 181–182 (EK), and serine 192 contribute to the alpha-D-glucose 1-phosphate site.

Belongs to the bacterial/plant glucose-1-phosphate adenylyltransferase family. Homotetramer.

It carries out the reaction alpha-D-glucose 1-phosphate + ATP + H(+) = ADP-alpha-D-glucose + diphosphate. It participates in glycan biosynthesis; glycogen biosynthesis. Involved in the biosynthesis of ADP-glucose, a building block required for the elongation reactions to produce glycogen. Catalyzes the reaction between ATP and alpha-D-glucose 1-phosphate (G1P) to produce pyrophosphate and ADP-Glc. The polypeptide is Glucose-1-phosphate adenylyltransferase (Bacillus cereus (strain ATCC 14579 / DSM 31 / CCUG 7414 / JCM 2152 / NBRC 15305 / NCIMB 9373 / NCTC 2599 / NRRL B-3711)).